Consider the following 455-residue polypeptide: tRNA modification GTPase MnmE (455 aa).

Residues K29, E91, and R131 each coordinate (6S)-5-formyl-5,6,7,8-tetrahydrofolate. Residues 226 to 378 form the TrmE-type G domain; it reads GLKVALVGLP…LIQELLKLAG (153 aa). Residue N236 coordinates K(+). Residues 236-241, 255-261, 280-283, and 341-344 contribute to the GTP site; these read NVGKSS, TDLPGTT, DTAG, and NKAD. S240 serves as a coordination point for Mg(2+). Positions 255, 257, and 260 each coordinate K(+). T261 is a Mg(2+) binding site. Residue K455 participates in (6S)-5-formyl-5,6,7,8-tetrahydrofolate binding.

It belongs to the TRAFAC class TrmE-Era-EngA-EngB-Septin-like GTPase superfamily. TrmE GTPase family. In terms of assembly, homodimer. Heterotetramer of two MnmE and two MnmG subunits. K(+) is required as a cofactor.

It is found in the cytoplasm. Its function is as follows. Exhibits a very high intrinsic GTPase hydrolysis rate. Involved in the addition of a carboxymethylaminomethyl (cmnm) group at the wobble position (U34) of certain tRNAs, forming tRNA-cmnm(5)s(2)U34. The chain is tRNA modification GTPase MnmE from Prochlorococcus marinus (strain SARG / CCMP1375 / SS120).